A 219-amino-acid chain; its full sequence is Elongation factor Ts, chloroplastic (219 aa).

It belongs to the EF-Ts family.

The protein localises to the plastid. It localises to the chloroplast. In terms of biological role, associates with the EF-Tu.GDP complex and induces the exchange of GDP to GTP. It remains bound to the aminoacyl-tRNA.EF-Tu.GTP complex up to the GTP hydrolysis stage on the ribosome. This Rhodomonas salina (Cryptomonas salina) protein is Elongation factor Ts, chloroplastic (tsf).